The primary structure comprises 398 residues: Phosphoglycerate kinase (398 aa).

Residues 21-23 (DFN), Arg36, 59-62 (HLGR), Arg119, and Arg157 each bind substrate. Residues Lys208, Gly296, Glu327, and 354–357 (GGDS) each bind ATP.

It belongs to the phosphoglycerate kinase family. In terms of assembly, monomer.

It localises to the cytoplasm. It catalyses the reaction (2R)-3-phosphoglycerate + ATP = (2R)-3-phospho-glyceroyl phosphate + ADP. It participates in carbohydrate degradation; glycolysis; pyruvate from D-glyceraldehyde 3-phosphate: step 2/5. This Streptococcus uberis (strain ATCC BAA-854 / 0140J) protein is Phosphoglycerate kinase.